The following is a 203-amino-acid chain: Small ribosomal subunit protein uS4 (203 aa).

The S4 RNA-binding domain maps to 93–154 (RRFDNVVYRC…KSRNLDAVAD (62 aa)).

This sequence belongs to the universal ribosomal protein uS4 family. In terms of assembly, part of the 30S ribosomal subunit. Contacts protein S5. The interaction surface between S4 and S5 is involved in control of translational fidelity.

Functionally, one of the primary rRNA binding proteins, it binds directly to 16S rRNA where it nucleates assembly of the body of the 30S subunit. Its function is as follows. With S5 and S12 plays an important role in translational accuracy. This is Small ribosomal subunit protein uS4 from Chlorobaculum parvum (strain DSM 263 / NCIMB 8327) (Chlorobium vibrioforme subsp. thiosulfatophilum).